Reading from the N-terminus, the 516-residue chain is GMP synthase [glutamine-hydrolyzing] (516 aa).

The Glutamine amidotransferase type-1 domain maps to 8–198 (KILILDFGSQ…ALNICKCDAL (191 aa)). The active-site Nucleophile is C84. Active-site residues include H172 and E174. The GMPS ATP-PPase domain maps to 199–391 (WNIENIIEND…LGLPYNMLYR (193 aa)). Residue 226 to 232 (SGGVDSS) participates in ATP binding.

As to quaternary structure, homodimer.

The enzyme catalyses XMP + L-glutamine + ATP + H2O = GMP + L-glutamate + AMP + diphosphate + 2 H(+). It participates in purine metabolism; GMP biosynthesis; GMP from XMP (L-Gln route): step 1/1. Functionally, catalyzes the synthesis of GMP from XMP. The polypeptide is GMP synthase [glutamine-hydrolyzing] (Francisella philomiragia subsp. philomiragia (strain ATCC 25017 / CCUG 19701 / FSC 153 / O#319-036)).